The chain runs to 693 residues: Phenoloxidase subunit 2 (693 aa).

A propeptide spanning residues 1–51 is cleaved from the precursor; it reads MADVFESLELLFDRPNEPLITPKGENNSVFQLTEQFLTEDYANNGIELNNR. 2 N-linked (GlcNAc...) asparagine glycosylation sites follow: Asn-26 and Asn-64. Cu cation contacts are provided by His-213, His-217, and His-243. Catalysis depends on Glu-351, which acts as the Proton acceptor. Cu cation is bound by residues His-366, His-370, and His-406. N-linked (GlcNAc...) asparagine glycans are attached at residues Asn-462 and Asn-494. Intrachain disulfides connect Cys-583-Cys-627 and Cys-585-Cys-634. An N-linked (GlcNAc...) asparagine glycan is attached at Asn-680.

In terms of assembly, heterodimer. Requires Cu(2+) as cofactor. Post-translationally, the N-terminus is blocked. Synthesized by hemocytes and released into the hemolymph plasma.

The protein localises to the secreted. It carries out the reaction 2 L-dopa + O2 = 2 L-dopaquinone + 2 H2O. It catalyses the reaction L-tyrosine + O2 = L-dopaquinone + H2O. Its function is as follows. This is a copper-containing oxidase that functions in the formation of pigments such as melanins and other polyphenolic compounds. Catalyzes the rate-limiting conversions of tyrosine to DOPA, DOPA to DOPA-quinone and possibly 5,6 dihydroxyindole to indole-5'6 quinone. This chain is Phenoloxidase subunit 2, found in Bombyx mori (Silk moth).